Here is a 1155-residue protein sequence, read N- to C-terminus: MIKRVHLGQGRADEILDLPNLIEIQLNSYEKFLQLDKLKNKKPLLNEGLESVFRNIFPIKSGNGDVALEYERYYIENDALNFTEKECKRKGQSYEAVLKVRLNLQFLTTGEIRQKDVYMGTIPLMTERGTFIINGAERVVVSQIHRSPGVVFYKEKDLYSARIIPYRGSWLEFEIDSKKDYLYVKIDRKKRILITLFLRALGFDTREKIIETFYNIKKIKVEDSTKRDLPGQYLAKSINIRENMYYRAGDKITLQDVEDFLQNGVNEIELVDFDGYDAISGKCFVSSNVILNCLEKEDAFFALKDGSKELPKESVMLAVYGALFPGEPISIDNAENDLKTIFFSERRYDLGRVGRYKLSKKFGFDDLSTSVLTMYDIVNTISHLLRIYEGHDILDDIDHLGNRRVRSVGELLTNIYKGAMSRVEKIAKDRMSNKEVFNLKPQELISVKPIVSAVKEFFATSQLSQFMDQVNPLAELTHKRRLNALGPGGLSRDRAGFEVRDVHYTHYGRMCPIETPEGPNIGLIVSLATYSRVNDYGFLETPYRKVVNGEVTDELEYLSAIDEEKKCIAQANAAFNSNGKYLEDLVSVRISGDYTTTNPKNIDYMDVSPRQLISVSSALIPFLEHNDANRALMGSNMQRQAVPLLFPKPPIVGTGMESVVAKDSGVVVKAKRSGEVILATSSKIVVKPFESENAKDLDEYHIVKYERTNQDTCFNQSVLVKEGQKVESGEIIADGPATRYGELALGNNLLLGVIPWNGFNYEDAILISDRIVKEDLYTSIHIKEFSIEVRETKLGPEKVTGDIPNVSEKILNKLDENGIIRIGTYVKPGDILVGKVTPKSEGDITPEFRLLTSIFGEKAKDVKNNSLKVPHGTEGTVIDVQRITKEDVGNLSPGVEEILKVYVAKKRKLKEGDKMAGRHGNKGVVAKILPVEDMPYLADGTPLDICLNPLGVPSRMNIGQLMESQLGLAGKYLGESYNVPVFESATNEQIQEKLKKAGFNPTSKEILYDGYTGEPFENEVMVGVIYMLKLHHLVDDKMHARSTGPYSLVSQQPLGGKAQFGGQRLGEMEVWALEAYGAAHTLQELLTVKSDDMSGRVKIYENIVKGVPTNVSGIPESFNVLMQELRGLGLDLSIYDDNGNQVPLTEKEEELINKG.

This sequence belongs to the RNA polymerase beta chain family. In terms of assembly, the RNAP catalytic core consists of 2 alpha, 1 beta, 1 beta' and 1 omega subunit. When a sigma factor is associated with the core the holoenzyme is formed, which can initiate transcription.

It catalyses the reaction RNA(n) + a ribonucleoside 5'-triphosphate = RNA(n+1) + diphosphate. DNA-dependent RNA polymerase catalyzes the transcription of DNA into RNA using the four ribonucleoside triphosphates as substrates. The chain is DNA-directed RNA polymerase subunit beta from Borrelia garinii subsp. bavariensis (strain ATCC BAA-2496 / DSM 23469 / PBi) (Borreliella bavariensis).